The primary structure comprises 2471 residues: Histidine protein kinase 1 (2471 aa).

Residues Met-1–Glu-10 show a composition bias toward polar residues. 3 disordered regions span residues Met-1–Tyr-30, Glu-52–Ser-75, and Arg-395–Gly-415. The span at Pro-11–Tyr-30 shows a compositional bias: basic and acidic residues. Residues Glu-358–Ile-636 form the Protein kinase domain. A Histidine kinase domain is found at Asn-2004–Ala-2225. His-2007 carries the post-translational modification Phosphohistidine; by autocatalysis. In terms of domain architecture, Response regulatory spans Arg-2340–Gly-2466. Asp-2394 bears the 4-aspartylphosphate mark.

Post-translationally, the phosphorelay mechanism involves the sequential transfer of a phosphate group from His-2007 (H1) in the histidine kinase domain (transmitter domain) to Asp-2394 (D1) of the response regulatory domain (receiver domain). This transfer probably occurs between two CHK1 molecules, rather than intramolecularly.

It carries out the reaction ATP + protein L-histidine = ADP + protein N-phospho-L-histidine.. Functionally, histidine kinase involved in a two-component signaling pathway that regulates cell wall mannan and glucan biosynthesis. Regulates quorum sensing as well as hyphal formation, biofilm formation, chlamidospore formation, and virulence. Plays a prominent role in phagocyte activation. Involved in the covering of the most potent pro-inflammatory cell wall molecules, the beta-glucans, underneath a dense mannan layer, so that the pathogen becomes partly invisible for immune cells such as phagocytes. The chain is Histidine protein kinase 1 (CHK1) from Candida albicans (strain SC5314 / ATCC MYA-2876) (Yeast).